We begin with the raw amino-acid sequence, 405 residues long: Polyketide biosynthesis cytochrome P450 PksS (405 aa).

A helical transmembrane segment spans residues 231–251; that stretch reads LYSMLFLLVVAGLETTVNLLG. Cys352 contacts heme.

It belongs to the cytochrome P450 family.

Its subcellular location is the cell membrane. It participates in antibiotic biosynthesis; bacillaene biosynthesis. In terms of biological role, involved in the metabolism of the antibiotic polyketide bacillaene which is involved in secondary metabolism. The substrate is dihydrobacillaene. The polypeptide is Polyketide biosynthesis cytochrome P450 PksS (pksS) (Bacillus subtilis (strain 168)).